Here is a 333-residue protein sequence, read N- to C-terminus: Biotin synthase (333 aa).

Positions 46 to 275 (YYGKKVKLNM…TKEIRISGGR (230 aa)) constitute a Radical SAM core domain. Cys64, Cys68, and Cys71 together coordinate [4Fe-4S] cluster. [2Fe-2S] cluster contacts are provided by Cys108, Cys140, Cys200, and Arg270.

Belongs to the radical SAM superfamily. Biotin synthase family. As to quaternary structure, homodimer. It depends on [4Fe-4S] cluster as a cofactor. Requires [2Fe-2S] cluster as cofactor.

It carries out the reaction (4R,5S)-dethiobiotin + (sulfur carrier)-SH + 2 reduced [2Fe-2S]-[ferredoxin] + 2 S-adenosyl-L-methionine = (sulfur carrier)-H + biotin + 2 5'-deoxyadenosine + 2 L-methionine + 2 oxidized [2Fe-2S]-[ferredoxin]. It participates in cofactor biosynthesis; biotin biosynthesis; biotin from 7,8-diaminononanoate: step 2/2. In terms of biological role, catalyzes the conversion of dethiobiotin (DTB) to biotin by the insertion of a sulfur atom into dethiobiotin via a radical-based mechanism. The sequence is that of Biotin synthase from Halalkalibacterium halodurans (strain ATCC BAA-125 / DSM 18197 / FERM 7344 / JCM 9153 / C-125) (Bacillus halodurans).